The chain runs to 618 residues: DNA mismatch repair protein MutL (618 aa).

Low complexity predominate over residues 367-381; the sequence is EPTAAREPATPRYSG. The disordered stretch occupies residues 367–402; it reads EPTAAREPATPRYSGGASGGNGGRQSAGGWPHAQPG. The span at 382-392 shows a compositional bias: gly residues; the sequence is GASGGNGGRQS.

This sequence belongs to the DNA mismatch repair MutL/HexB family.

In terms of biological role, this protein is involved in the repair of mismatches in DNA. It is required for dam-dependent methyl-directed DNA mismatch repair. May act as a 'molecular matchmaker', a protein that promotes the formation of a stable complex between two or more DNA-binding proteins in an ATP-dependent manner without itself being part of a final effector complex. This chain is DNA mismatch repair protein MutL, found in Salmonella dublin (strain CT_02021853).